Consider the following 200-residue polypeptide: GTP-dependent dephospho-CoA kinase (200 aa).

GTP is bound by residues Asp56, Val57, Val58, Asp75, and Glu132.

The protein belongs to the GTP-dependent DPCK family.

It catalyses the reaction 3'-dephospho-CoA + GTP = GDP + CoA + H(+). It participates in cofactor biosynthesis; coenzyme A biosynthesis. Functionally, catalyzes the GTP-dependent phosphorylation of the 3'-hydroxyl group of dephosphocoenzyme A to form coenzyme A (CoA). The protein is GTP-dependent dephospho-CoA kinase of Caldivirga maquilingensis (strain ATCC 700844 / DSM 13496 / JCM 10307 / IC-167).